Here is a 586-residue protein sequence, read N- to C-terminus: Assimilatory ferredoxin-dependent nitrite reductase (586 aa).

[4Fe-4S] cluster is bound by residues Cys411, Cys417, Cys455, and Cys459. Cys459 contributes to the siroheme binding site. Residues 566–586 (SWYPFADEDEPPKTEQPMTSD) form a disordered region.

The protein belongs to the nitrite and sulfite reductase 4Fe-4S domain family. Monomer. Siroheme serves as cofactor. The cofactor is [4Fe-4S] cluster.

The enzyme catalyses 6 oxidized [2Fe-2S]-[ferredoxin] + NH4(+) + 2 H2O = nitrite + 6 reduced [2Fe-2S]-[ferredoxin] + 8 H(+). The protein operates within nitrogen metabolism; nitrate reduction (assimilation). With respect to regulation, inhibited by cyanide and azide. Functionally, catalyzes the reduction of nitrite to ammonium in the nitrate assimilation pathway, using ferredoxin as the electron donor. Can use reduced methyl viologen but neither NADPH nor NADH as electron donors. The chain is Assimilatory ferredoxin-dependent nitrite reductase from Haloferax mediterranei (strain ATCC 33500 / DSM 1411 / JCM 8866 / NBRC 14739 / NCIMB 2177 / R-4) (Halobacterium mediterranei).